A 223-amino-acid chain; its full sequence is AN1-type zinc finger protein 6 (223 aa).

The A20-type zinc-finger motif lies at 8-42 (SQAPMLCSTGCGFYGNPRTNGMCSVCYKEHLQRQN). Zn(2+) contacts are provided by Cys14, Cys18, Cys30, and Cys33. Residues 41-155 (QNSSNGRISP…PSEEQSKSLE (115 aa)) form a disordered region. Ser49 bears the Phosphoserine mark. Polar residues-rich tracts occupy residues 77 to 110 (ALDS…STSV) and 137 to 148 (SSVSDTTQQPSE). The AN1-type zinc-finger motif lies at 158 to 204 (KQKKNRCFMCRKKVGLTGFECRCGNVYCGVHRYSDVHNCSYNYKADA). Cys164, Cys167, Cys178, Cys180, Cys185, His188, His194, and Cys196 together coordinate Zn(2+). Position 219 is an N6-acetyllysine (Lys219).

Interacts with PKN1. Interacts with TRAF2. Interacts with mono- and polyubiquitin. Interacts with PEX6. Interacts with PEX5 (Cys-linked ubiquitinated).

The protein localises to the cytoplasm. Functionally, involved in regulation of TNF-alpha induced NF-kappa-B activation and apoptosis. Involved in modulation of 'Lys-48'-linked polyubiquitination status of TRAF2 and decreases association of TRAF2 with RIPK1. Required for PTS1 target sequence-dependent protein import into peroxisomes and PEX5 stability; may cooperate with PEX6. In vitro involved in PEX5 export from the cytosol to peroxisomes. The protein is AN1-type zinc finger protein 6 (Zfand6) of Mus musculus (Mouse).